The sequence spans 314 residues: Homoserine kinase (314 aa).

96 to 106 (PIGSGLGSSAC) is a binding site for ATP.

This sequence belongs to the GHMP kinase family. Homoserine kinase subfamily.

It is found in the cytoplasm. The catalysed reaction is L-homoserine + ATP = O-phospho-L-homoserine + ADP + H(+). It participates in amino-acid biosynthesis; L-threonine biosynthesis; L-threonine from L-aspartate: step 4/5. Its function is as follows. Catalyzes the ATP-dependent phosphorylation of L-homoserine to L-homoserine phosphate. This chain is Homoserine kinase, found in Haemophilus influenzae (strain 86-028NP).